A 338-amino-acid polypeptide reads, in one-letter code: 1-aminocyclopropane-1-carboxylate deaminase (338 aa).

At Lys-51 the chain carries N6-(pyridoxal phosphate)lysine. The active-site Nucleophile is the Ser-78.

It belongs to the ACC deaminase/D-cysteine desulfhydrase family. Homotrimer. The cofactor is pyridoxal 5'-phosphate.

The catalysed reaction is 1-aminocyclopropane-1-carboxylate + H2O = 2-oxobutanoate + NH4(+). Functionally, catalyzes a cyclopropane ring-opening reaction, the irreversible conversion of 1-aminocyclopropane-1-carboxylate (ACC) to ammonia and alpha-ketobutyrate. Allows growth on ACC as a nitrogen source. The chain is 1-aminocyclopropane-1-carboxylate deaminase from Pseudomonas fluorescens.